Consider the following 576-residue polypeptide: 5'-nucleotidase (576 aa).

Positions 1-28 (MRPAAAKVPKWLLLALSALLPQWPAASA) are cleaved as a signal peptide. 2 residues coordinate Zn(2+): Asp38 and His40. Cys53 and Cys59 are oxidised to a cystine. The N-linked (GlcNAc...) asparagine glycan is linked to Asn55. Asp87, Asn119, His222, and His245 together coordinate Zn(2+). Residues Asn313 and Asn335 are each glycosylated (N-linked (GlcNAc...) asparagine). Cystine bridges form between Cys355–Cys360 and Cys367–Cys389. Arg356 contributes to the AMP binding site. Residue Arg356 participates in IMP binding. Asn392 and Arg397 together coordinate AMP. IMP is bound by residues Asn392 and Arg397. N-linked (GlcNAc...) asparagine glycosylation is present at Asn405. Position 419 (Phe419) interacts with AMP. Position 419 (Phe419) interacts with IMP. Cys478 and Cys481 are joined by a disulfide. 2 residues coordinate AMP: Tyr502 and Asp508. IMP-binding residues include Tyr502 and Asp508. Ser551 carries GPI-anchor amidated serine lipidation. Residues 552–576 (AASHYQGSFPLVILSFWAMILILYQ) constitute a propeptide, removed in mature form.

Belongs to the 5'-nucleotidase family. Homodimer. Zn(2+) is required as a cofactor. As to expression, expressed at high levels in the placenta, kidney, lung and stomach and at lower levels in the thymus, spleen, skeletal muscle and esophagus.

The protein localises to the cell membrane. The enzyme catalyses a ribonucleoside 5'-phosphate + H2O = a ribonucleoside + phosphate. It catalyses the reaction a 2'-deoxyribonucleoside 5'-phosphate + H2O = a 2'-deoxyribonucleoside + phosphate. It carries out the reaction dTMP + H2O = thymidine + phosphate. The catalysed reaction is CMP + H2O = cytidine + phosphate. The enzyme catalyses IMP + H2O = inosine + phosphate. It catalyses the reaction AMP + H2O = adenosine + phosphate. It carries out the reaction GMP + H2O = guanosine + phosphate. The catalysed reaction is UMP + H2O = uridine + phosphate. The enzyme catalyses dAMP + H2O = 2'-deoxyadenosine + phosphate. It catalyses the reaction dCMP + H2O = 2'-deoxycytidine + phosphate. In terms of biological role, catalyzes the hydrolysis of nucleotide monophosphates, releasing inorganic phosphate and the corresponding nucleoside. Hydrolyzes IMP. Shows a preference for ribonucleotide monophosphates over their equivalent deoxyribose forms. Although AMP is the preferred substrate can also hydrolyze UMP, GMP, CMP, dAMP, dCMP, dTMP, NAD and NMN. The sequence is that of 5'-nucleotidase (Nt5e) from Mus musculus (Mouse).